We begin with the raw amino-acid sequence, 231 residues long: Transmembrane protein 225 (231 aa).

Residues 1–13 (MVHILVRKVEATN) are Cytoplasmic-facing. The helical transmembrane segment at 14 to 34 (MFFSSWTLVFLAVGIIIEEWA) threads the bilayer. At 35–67 (ELKLGPQKPTITHSPWICCTPLWPSDGLEVIRN) the chain is on the extracellular side. The helical transmembrane segment at 68–88 (ILIVVLSLSFMHNLLLGFEFT) threads the bilayer. At 89-97 (YMIPQTKYT) the chain is on the cytoplasmic side. A helical membrane pass occupies residues 98–118 (LIMTACLAFLTGILLLGALLL). Topologically, residues 119–135 (YHHMLRQGESVYYSSYK) are extracellular. The chain crosses the membrane as a helical span at residues 136-156 (ISWIIFTAYLNVLFLFISGFL). Over 157 to 231 (SLLQYKQPID…IQARRVTWAL (75 aa)) the chain is Cytoplasmic. The RVxF motif lies at 225–229 (RRVTW).

Interacts (via RVxF motif) with PPP1CC.

It localises to the cytoplasmic vesicle. Its subcellular location is the secretory vesicle. It is found in the acrosome membrane. Probably inhibits protein phosphatase 1 (PP1) in sperm via binding to catalytic subunit PPP1CC. In Bos taurus (Bovine), this protein is Transmembrane protein 225 (TMEM225).